The following is a 252-amino-acid chain: 5'-nucleotidase SurE (252 aa).

A divalent metal cation is bound by residues aspartate 8, aspartate 9, serine 39, and asparagine 95.

The protein belongs to the SurE nucleotidase family. Requires a divalent metal cation as cofactor.

It is found in the cytoplasm. The enzyme catalyses a ribonucleoside 5'-phosphate + H2O = a ribonucleoside + phosphate. Its function is as follows. Nucleotidase that shows phosphatase activity on nucleoside 5'-monophosphates. In Clostridium botulinum (strain Okra / Type B1), this protein is 5'-nucleotidase SurE.